We begin with the raw amino-acid sequence, 468 residues long: Protein maelstrom 2 (468 aa).

The segment at residues 2 to 69 (PPKKHSGFMM…LTRVKKERLN (68 aa)) is a DNA-binding region (HMG box). Positions 374–393 (KEDSPTVLSPASSRRSLASS) are disordered. A compositionally biased stretch (low complexity) spans 381-393 (LSPASSRRSLASS).

It belongs to the maelstrom family.

Its subcellular location is the cytoplasm. The protein resides in the nucleus. Involved both in the piRNA and miRNA metabolic processes. As a component of the meiotic nuage, plays a central role during oogenesis by repressing transposable elements and preventing their mobilization, which is essential for the germline integrity. Repression of transposable elements is mediated via the piRNA metabolic process, which mediates the repression of transposable elements during meiosis by forming complexes composed of piRNAs and Piwi proteins and governs the repression of transposons. As a nuclear component, it is required for proper differentiation in the germline stem cell (GSC) lineage by repressing microRNA-7 (miR-7), thereby acting as an indirect regulator of bag-of-marbles (Bam). Acts by binding to the promoter of miR-7 gene and repressing its expression; miR-7 repression alleviates the Bam repression by miR-7, thereby allowing differentiation in the germline stem cell (GSC) lineage. This is Protein maelstrom 2 (mael2) from Drosophila ananassae (Fruit fly).